The chain runs to 171 residues: ATP synthase subunit b (171 aa).

A helical transmembrane segment spans residues 2 to 22 (FVVKMVLGFLILLSPLCATGL).

Belongs to the ATPase B chain family. In terms of assembly, F-type ATPases have 2 components, F(1) - the catalytic core - and F(0) - the membrane proton channel. F(1) has five subunits: alpha(3), beta(3), gamma(1), delta(1), epsilon(1). F(0) has three main subunits: a(1), b(2) and c(10-14). The alpha and beta chains form an alternating ring which encloses part of the gamma chain. F(1) is attached to F(0) by a central stalk formed by the gamma and epsilon chains, while a peripheral stalk is formed by the delta and b chains.

It localises to the cell inner membrane. F(1)F(0) ATP synthase produces ATP from ADP in the presence of a proton or sodium gradient. F-type ATPases consist of two structural domains, F(1) containing the extramembraneous catalytic core and F(0) containing the membrane proton channel, linked together by a central stalk and a peripheral stalk. During catalysis, ATP synthesis in the catalytic domain of F(1) is coupled via a rotary mechanism of the central stalk subunits to proton translocation. Functionally, component of the F(0) channel, it forms part of the peripheral stalk, linking F(1) to F(0). The polypeptide is ATP synthase subunit b (Helicobacter pylori (strain ATCC 700392 / 26695) (Campylobacter pylori)).